The primary structure comprises 224 residues: Cytidylate kinase (224 aa).

11–19 (GPAAAGKST) is a binding site for ATP.

Belongs to the cytidylate kinase family. Type 1 subfamily.

The protein localises to the cytoplasm. It catalyses the reaction CMP + ATP = CDP + ADP. It carries out the reaction dCMP + ATP = dCDP + ADP. In Geobacillus kaustophilus (strain HTA426), this protein is Cytidylate kinase.